An 86-amino-acid chain; its full sequence is MKQTMYKPKRSFRRNLTPIRRHLSPIGSGDRIDYKNMSLISRFISEQGXILSGRVNRLTSKQQRLMTNAIKRARILSLLPFLYNEN.

Belongs to the bacterial ribosomal protein bS18 family. As to quaternary structure, part of the 30S ribosomal subunit.

Its subcellular location is the plastid. The protein localises to the chloroplast. This is Small ribosomal subunit protein bS18c from Pseudotsuga menziesii (Douglas-fir).